An 85-amino-acid chain; its full sequence is Anti-neuroexcitation peptide 2 (85 aa).

The N-terminal stretch at 1-21 (MKLSLLLVISASMLIDGLVNA) is a signal peptide. An LCN-type CS-alpha/beta domain is found at 22–82 (DGYIRGSNGC…TWKSESNTCG (61 aa)). Intrachain disulfides connect C31/C81, C35/C56, C42/C63, and C46/C65.

The protein belongs to the long (4 C-C) scorpion toxin superfamily. Sodium channel inhibitor family. Beta subfamily. Expressed by the venom gland.

It is found in the secreted. In terms of biological role, binds to sodium channels (Nav) and inhibits them. Recombinant ANEP delays the convulsion seizure of insect models by 18% and shows anti-neuroexcitatory activity. The protein is Anti-neuroexcitation peptide 2 of Olivierus martensii (Manchurian scorpion).